The sequence spans 173 residues: Crossover junction endodeoxyribonuclease RuvC (173 aa).

Residues D11, E71, and D143 contribute to the active site. Residues D11, E71, and D143 each contribute to the Mg(2+) site.

It belongs to the RuvC family. As to quaternary structure, homodimer which binds Holliday junction (HJ) DNA. The HJ becomes 2-fold symmetrical on binding to RuvC with unstacked arms; it has a different conformation from HJ DNA in complex with RuvA. In the full resolvosome a probable DNA-RuvA(4)-RuvB(12)-RuvC(2) complex forms which resolves the HJ. It depends on Mg(2+) as a cofactor.

It is found in the cytoplasm. It catalyses the reaction Endonucleolytic cleavage at a junction such as a reciprocal single-stranded crossover between two homologous DNA duplexes (Holliday junction).. Functionally, the RuvA-RuvB-RuvC complex processes Holliday junction (HJ) DNA during genetic recombination and DNA repair. Endonuclease that resolves HJ intermediates. Cleaves cruciform DNA by making single-stranded nicks across the HJ at symmetrical positions within the homologous arms, yielding a 5'-phosphate and a 3'-hydroxyl group; requires a central core of homology in the junction. The consensus cleavage sequence is 5'-(A/T)TT(C/G)-3'. Cleavage occurs on the 3'-side of the TT dinucleotide at the point of strand exchange. HJ branch migration catalyzed by RuvA-RuvB allows RuvC to scan DNA until it finds its consensus sequence, where it cleaves and resolves the cruciform DNA. The protein is Crossover junction endodeoxyribonuclease RuvC of Brucella abortus (strain 2308).